Consider the following 269-residue polypeptide: Phosphate import ATP-binding protein PstB (269 aa).

An ABC transporter domain is found at 22-264 (IKVKNVDFFY…PANKKTEDYI (243 aa)). 55 to 62 (GSSGSGKS) serves as a coordination point for ATP.

Belongs to the ABC transporter superfamily. Phosphate importer (TC 3.A.1.7) family. In terms of assembly, the complex is composed of two ATP-binding proteins (PstB), two transmembrane proteins (PstC and PstA) and a solute-binding protein (PstS).

It localises to the cell membrane. It carries out the reaction phosphate(out) + ATP + H2O = ADP + 2 phosphate(in) + H(+). Functionally, part of the ABC transporter complex PstSACB involved in phosphate import. Responsible for energy coupling to the transport system. The sequence is that of Phosphate import ATP-binding protein PstB from Spiroplasma kunkelii.